The chain runs to 225 residues: UPF0758 protein Sden_0326 (225 aa).

Residues 102–224 (ILTNPDLTRD…IVSFAERGWL (123 aa)) form the MPN domain. Residues His-173, His-175, and Asp-186 each contribute to the Zn(2+) site. The JAMM motif signature appears at 173 to 186 (HNHPSGIAEPSQAD).

It belongs to the UPF0758 family.

This is UPF0758 protein Sden_0326 from Shewanella denitrificans (strain OS217 / ATCC BAA-1090 / DSM 15013).